The sequence spans 411 residues: Probable peptidoglycan glycosyltransferase FtsW (411 aa).

Over 1 to 40 (MLERMLPFLGRKRDKAAADLPVRVGHSAPRNSRMLEYDQN) the chain is Cytoplasmic. Residues 41-61 (LVWVTLLLLAYGLVMVYSATI) traverse the membrane as a helical segment. The Periplasmic segment spans residues 62-81 (SFHDSPRYAQWSPYHYFIRD). Residues 82 to 102 (LFSIAAALLASWIVVQIPMAE) traverse the membrane as a helical segment. The Cytoplasmic portion of the chain corresponds to 103–109 (LQKWSMR). Residues 110 to 130 (FFFLSLIGLVLVLLPHIGKDV) form a helical membrane-spanning segment. Residues 131-136 (NGSKRW) are Periplasmic-facing. A helical membrane pass occupies residues 137 to 157 (VVFPGGLNFQPSELVKLTALI). Residues 158-172 (YAADFMVRKQEVKQS) are Cytoplasmic-facing. A helical transmembrane segment spans residues 173–193 (LLKTFLPMMAVMMIVGVLLLA). Residues 194-196 (EPD) are Periplasmic-facing. Residues 197 to 217 (MGAFLVIASITLAILFLGGAN) traverse the membrane as a helical segment. Residues 218–219 (GK) lie on the Cytoplasmic side of the membrane. A helical membrane pass occupies residues 220-240 (LFSVFSVAVIGAFVLMIVLSP). At 241-298 (WRRDRIFAYLNPWSESNALGSAYQLSHALIAMGRGEWFGVGLGGSIEKLHYLPEAHTD) the chain is on the periplasmic side. A helical transmembrane segment spans residues 299–319 (FLLAIIGEELGLVGVGVVIFA). Residues 320–347 (FYWIVRRAFDIGRQALVLDRMYSALVAQ) lie on the Cytoplasmic side of the membrane. Residues 348 to 368 (GIGVWIGGQAFINIGVNLGLL) form a helical membrane-spanning segment. The Periplasmic segment spans residues 369–374 (PTKGLT). Residues 375–395 (LPLMSYGGSALLLNCMAIAVL) traverse the membrane as a helical segment. The Cytoplasmic portion of the chain corresponds to 396 to 411 (LRVDFENRILMRGGHV).

Belongs to the SEDS family. FtsW subfamily.

The protein resides in the cell inner membrane. It catalyses the reaction [GlcNAc-(1-&gt;4)-Mur2Ac(oyl-L-Ala-gamma-D-Glu-L-Lys-D-Ala-D-Ala)](n)-di-trans,octa-cis-undecaprenyl diphosphate + beta-D-GlcNAc-(1-&gt;4)-Mur2Ac(oyl-L-Ala-gamma-D-Glu-L-Lys-D-Ala-D-Ala)-di-trans,octa-cis-undecaprenyl diphosphate = [GlcNAc-(1-&gt;4)-Mur2Ac(oyl-L-Ala-gamma-D-Glu-L-Lys-D-Ala-D-Ala)](n+1)-di-trans,octa-cis-undecaprenyl diphosphate + di-trans,octa-cis-undecaprenyl diphosphate + H(+). It functions in the pathway cell wall biogenesis; peptidoglycan biosynthesis. Functionally, peptidoglycan polymerase that is essential for cell division. In Thiomonas intermedia (strain K12) (Thiobacillus intermedius), this protein is Probable peptidoglycan glycosyltransferase FtsW.